The following is an 87-amino-acid chain: Type 3 secretion system needle filament protein (87 aa).

Belongs to the SctF family. The core secretion machinery of the T3SS is composed of approximately 20 different proteins, including cytoplasmic components, a base, an export apparatus and a needle. This subunit polymerizes and forms the helical needle filament. Forms high-order oligomers in vitro. Forms a stable ternary complex with the YscE-YscG chaperone. Interacts directly with YscG but makes very little direct contact with YscE. Interacts with the needle adapter protein YscI/SctI.

It localises to the secreted. The protein localises to the cell surface. With respect to regulation, the secretion and/or polymerization may be controlled by the type III secretion system regulator YopR. Interaction with YscE-YscG chaperone prevents premature polymerization of YscF/SctF in the bacterial cytosol and is required for its stability and efficient secretion. Interaction with the needle adapter protein YscI/SctI is required for YscF/SctF secretion, needle assembly and Yop secretion. The N-terminus varies among bacterial species, not only in amino acid composition but also in the number of amino acids, and may function in manipulating the host response to the advantage of the bacteria. In Y.pestis, the N-terminus can function to decrease cytokine induction, perhaps contributing to a favorable immune environment leading to survival of Y.pestis within the eukaryotic host. Component of the type III secretion system (T3SS), also called injectisome, which is used to inject bacterial effector proteins into eukaryotic host cells. YscF/SctF forms the external needle filament that protrudes from the bacterial surface. Essential for the calcium-dependent regulation of T3SS and Yop secretion. Required to block Yop secretion in the presence of extracellular calcium. May be the extracellular T3SS component that senses extracellular calcium and/or participates in transmitting the calcium signal to the cytoplasmic compartment where the block in secretion is initiated. Its function is as follows. During infection, can induce innate immune responses. The needle proteins interact with host TLR2 or TLR4, and induce signaling by NF-kappa-B and/or AP-1. This activation is MyD88 dependent and results in increased expression of cytokines, including TNF-alpha, IL-6 and IL-8. Innate immune responses are modulated by the N-terminal region of YscF/SctF. The chain is Type 3 secretion system needle filament protein from Yersinia pestis.